Here is a 313-residue protein sequence, read N- to C-terminus: Beta-ketoacyl-[acyl-carrier-protein] synthase III (313 aa).

Residues Cys-112 and His-238 contribute to the active site. An ACP-binding region spans residues 239–243 (QANIR). The active site involves Asn-268.

This sequence belongs to the thiolase-like superfamily. FabH family. In terms of assembly, homodimer.

It localises to the cytoplasm. The enzyme catalyses malonyl-[ACP] + acetyl-CoA + H(+) = 3-oxobutanoyl-[ACP] + CO2 + CoA. It participates in lipid metabolism; fatty acid biosynthesis. Functionally, catalyzes the condensation reaction of fatty acid synthesis by the addition to an acyl acceptor of two carbons from malonyl-ACP. Catalyzes the first condensation reaction which initiates fatty acid synthesis and may therefore play a role in governing the total rate of fatty acid production. Possesses both acetoacetyl-ACP synthase and acetyl transacylase activities. Its substrate specificity determines the biosynthesis of branched-chain and/or straight-chain of fatty acids. The sequence is that of Beta-ketoacyl-[acyl-carrier-protein] synthase III from Staphylococcus epidermidis (strain ATCC 35984 / DSM 28319 / BCRC 17069 / CCUG 31568 / BM 3577 / RP62A).